Consider the following 195-residue polypeptide: Glycerol-3-phosphate acyltransferase (195 aa).

Helical transmembrane passes span 3–23 (EAALLVLCYLLGSIPFSYFFT), 51–71 (GVALLAFLGDLLKGLLAAWIG), 79–99 (LLVICVILAVIGHIYPVFLGF), 111–131 (IILFLMPDVTGILLLIFLAIV), and 153–173 (LAMGKPWSYVVIGILMAALVV).

Belongs to the PlsY family. In terms of assembly, probably interacts with PlsX.

The protein localises to the cell membrane. The enzyme catalyses an acyl phosphate + sn-glycerol 3-phosphate = a 1-acyl-sn-glycero-3-phosphate + phosphate. It participates in lipid metabolism; phospholipid metabolism. Functionally, catalyzes the transfer of an acyl group from acyl-phosphate (acyl-PO(4)) to glycerol-3-phosphate (G3P) to form lysophosphatidic acid (LPA). This enzyme utilizes acyl-phosphate as fatty acyl donor, but not acyl-CoA or acyl-ACP. This chain is Glycerol-3-phosphate acyltransferase, found in Syntrophomonas wolfei subsp. wolfei (strain DSM 2245B / Goettingen).